The primary structure comprises 173 residues: Membrane protein PM19L (173 aa).

The next 4 membrane-spanning stretches (helical) occupy residues 9 to 29 (IAPL…FASW), 43 to 63 (GVAG…AGVV), 83 to 103 (LAAG…AFGL), and 124 to 144 (FVII…GGLF).

In terms of tissue distribution, expressed in roots, leaf blades, leaf sheaths, stems, spikelets and embryos.

The protein resides in the membrane. In terms of biological role, may be involved in abiotic stress response through abscisic acid-dependent signaling. The protein is Membrane protein PM19L of Oryza sativa subsp. japonica (Rice).